Consider the following 434-residue polypeptide: Anaerobic glycerol-3-phosphate dehydrogenase subunit B (434 aa).

Belongs to the anaerobic G-3-P dehydrogenase subunit B family. Composed of a catalytic GlpA/B dimer and of membrane bound GlpC. FMN serves as cofactor.

It catalyses the reaction a quinone + sn-glycerol 3-phosphate = dihydroxyacetone phosphate + a quinol. It functions in the pathway polyol metabolism; glycerol degradation via glycerol kinase pathway; glycerone phosphate from sn-glycerol 3-phosphate (anaerobic route): step 1/1. Functionally, conversion of glycerol 3-phosphate to dihydroxyacetone. Uses fumarate or nitrate as electron acceptor. In Histophilus somni (strain 2336) (Haemophilus somnus), this protein is Anaerobic glycerol-3-phosphate dehydrogenase subunit B.